Reading from the N-terminus, the 473-residue chain is H(+)/Cl(-) exchange transporter ClcA (473 aa).

At 1–32 (MKTDTSTFLAQQIVRLRRRDQIRRLMQRDKTP) the chain is on the cytoplasmic side. The helical transmembrane segment at 33–69 (LAILLMAAVVGTLTGLVGVAFEKAVSWVQNMRIGALV) threads the bilayer. The Periplasmic portion of the chain corresponds to 70-76 (QVADHAF). The helical transmembrane segment at 77 to 100 (LLWPLAFILSALLAMVGYFLVRKF) threads the bilayer. The short motif at 106-110 (GSGIP) is the Selectivity filter part_1 element. Position 107 (serine 107) interacts with chloride. The segment at residues 109–116 (IPEIEGAL) is an intramembrane region (helical). Topologically, residues 117–123 (EELRPVR) are cytoplasmic. 2 helical membrane-spanning segments follow: residues 124–141 (WWRVLPVKFIGGMGTLGA) and 148–166 (EGPTVQIGGNLGRMVLDVF). Residues 146 to 150 (GREGP) carry the Selectivity filter part_2 motif. Residues 167-176 (RMRSAEARHT) lie on the Cytoplasmic side of the membrane. 2 consecutive intramembrane regions (helical) follow at residues 177 to 189 (LLATGAAAGLSAA) and 193 to 201 (PLAGILFII). Topologically, residues 202–214 (EEMRPQFRYNLIS) are cytoplasmic. Residues 215–232 (IKAVFTGVIMSSIVFRIF) traverse the membrane as a helical segment. At 233 to 252 (NGEAPIIEVGKLSDAPVNTL) the chain is on the periplasmic side. A helical transmembrane segment spans residues 253-281 (WLYLILGIIFGCVGPVFNSLVLRTQDMFQ). Topologically, residues 282-287 (RFHGGE) are cytoplasmic. A helical membrane pass occupies residues 288 to 309 (IKKWVLMGGAIGGLCGILGLIE). At 310 to 329 (PEAAGGGFNLIPIAAAGNFS) the chain is on the periplasmic side. Transmembrane regions (helical) follow at residues 330 to 349 (VGLLLFIFITRVVTTLLCFS) and 355 to 376 (GIFAPMLALGTLLGTAFGMAAA). The Selectivity filter part_3 motif lies at 355-359 (GIFAP). Chloride is bound by residues isoleucine 356 and phenylalanine 357. The Periplasmic portion of the chain corresponds to 377–386 (VLFPQYHLEA). Positions 387 to 401 (GTFAIAGMGALMAAS) form an intramembrane region, helical. Positions 402–404 (VRA) form an intramembrane region, note=Loop between two helices. Positions 405-416 (PLTGIVLVLEMT) form an intramembrane region, helical. The note=Loop between two helices intramembrane region spans 417-421 (DNYQL). The chain crosses the membrane as a helical span at residues 422–438 (ILPMIITCLGATLLAQF). Over 439 to 473 (LGGKPLYSTILARTLAKQDAEQAAKNQNAPAGENT) the chain is Cytoplasmic. Tyrosine 445 lines the chloride pocket.

It belongs to the chloride channel (TC 2.A.49) family. ClcA subfamily. Homodimer.

The protein resides in the cell inner membrane. The catalysed reaction is 2 chloride(in) + H(+)(out) = 2 chloride(out) + H(+)(in). Proton-coupled chloride transporter. Functions as antiport system and exchanges two chloride ions for 1 proton. Probably acts as an electrical shunt for an outwardly-directed proton pump that is linked to amino acid decarboxylation, as part of the extreme acid resistance (XAR) response. This chain is H(+)/Cl(-) exchange transporter ClcA, found in Salmonella newport (strain SL254).